Reading from the N-terminus, the 427-residue chain is Peptidase B (427 aa).

Mn(2+) contacts are provided by Lys-195 and Asp-200. Lys-207 is a catalytic residue. The Mn(2+) site is built by Asp-218, Asp-277, and Glu-279. Residue Arg-281 is part of the active site.

This sequence belongs to the peptidase M17 family. In terms of assembly, homohexamer. Mn(2+) serves as cofactor.

The protein resides in the cytoplasm. The enzyme catalyses Release of an N-terminal amino acid, Xaa, from a peptide or arylamide. Xaa is preferably Glu or Asp but may be other amino acids, including Leu, Met, His, Cys and Gln.. Its function is as follows. Probably plays an important role in intracellular peptide degradation. The protein is Peptidase B of Escherichia coli O127:H6 (strain E2348/69 / EPEC).